We begin with the raw amino-acid sequence, 162 residues long: Cytochrome c-type biogenesis protein CcmE (162 aa).

Residues 1–8 (MNPVRKKR) lie on the Cytoplasmic side of the membrane. The chain crosses the membrane as a helical; Signal-anchor for type II membrane protein span at residues 9-29 (LIIVLAILVGVGAAVGLALSA). The Periplasmic segment spans residues 30–162 (LQQNINLFYT…GETSYNQEGK (133 aa)). Positions 124 and 128 each coordinate heme. Residues 139–148 (DSGQLKHYEN) show a composition bias toward basic and acidic residues. The tract at residues 139 to 162 (DSGQLKHYENGKAAGETSYNQEGK) is disordered.

This sequence belongs to the CcmE/CycJ family.

It localises to the cell inner membrane. In terms of biological role, heme chaperone required for the biogenesis of c-type cytochromes. Transiently binds heme delivered by CcmC and transfers the heme to apo-cytochromes in a process facilitated by CcmF and CcmH. The protein is Cytochrome c-type biogenesis protein CcmE of Pseudomonas paraeruginosa (strain DSM 24068 / PA7) (Pseudomonas aeruginosa (strain PA7)).